The primary structure comprises 468 residues: Aldehyde dehydrogenase family 3 member B1 (468 aa).

Met-1 carries the N-acetylmethionine modification. 188–193 (GSPRVG) is a binding site for NAD(+). Residues Glu-210 and Cys-244 contribute to the active site. Residue Cys-463 is the site of S-palmitoyl cysteine attachment. Cys-465 carries the cysteine methyl ester modification. Cys-465 carries the S-geranylgeranyl cysteine lipid modification. Positions 466–468 (TLL) are cleaved as a propeptide — removed in mature form.

Belongs to the aldehyde dehydrogenase family. Post-translationally, dually lipidated in the C-terminus; prenylation occurs prior to, and is a prerequisite for palmitoylation. It is also required for activity towards long-chain substrates. Highest expression in kidney and lung.

Its subcellular location is the cell membrane. It carries out the reaction an aldehyde + NADP(+) + H2O = a carboxylate + NADPH + 2 H(+). The enzyme catalyses an aldehyde + NAD(+) + H2O = a carboxylate + NADH + 2 H(+). It catalyses the reaction a long-chain fatty aldehyde + NAD(+) + H2O = a long-chain fatty acid + NADH + 2 H(+). The catalysed reaction is a medium-chain fatty aldehyde + NAD(+) + H2O = a medium-chain fatty acid + NADH + 2 H(+). It carries out the reaction octanal + NAD(+) + H2O = octanoate + NADH + 2 H(+). The enzyme catalyses nonanal + NAD(+) + H2O = nonanoate + NADH + 2 H(+). It catalyses the reaction hexadecanoate + NADH + 2 H(+) = hexadecanal + NAD(+) + H2O. The catalysed reaction is (2E)-octenal + NAD(+) + H2O = (2E)-octenoate + NADH + 2 H(+). It carries out the reaction (E)-non-2-enal + NAD(+) + H2O = (E)-non-2-enoate + NADH + 2 H(+). The enzyme catalyses (E)-4-hydroxynon-2-enal + NAD(+) + H2O = (E)-4-hydroxynon-2-enoate + NADH + 2 H(+). It catalyses the reaction (2E)-hexadecenal + NAD(+) + H2O = (E)-hexadec-2-enoate + NADH + 2 H(+). The catalysed reaction is benzaldehyde + NAD(+) + H2O = benzoate + NADH + 2 H(+). It carries out the reaction a medium-chain fatty aldehyde + NADP(+) + H2O = a medium-chain fatty acid + NADPH + 2 H(+). The enzyme catalyses hexanal + NADP(+) + H2O = hexanoate + NADPH + 2 H(+). It catalyses the reaction octanal + NADP(+) + H2O = octanoate + NADPH + 2 H(+). The catalysed reaction is nonanal + NADP(+) + H2O = nonanoate + NADPH + 2 H(+). It carries out the reaction (2E)-octenal + NADP(+) + H2O = (2E)-octenoate + NADPH + 2 H(+). The enzyme catalyses (E)-non-2-enal + NADP(+) + H2O = (E)-non-2-enoate + NADPH + 2 H(+). It catalyses the reaction (E)-4-hydroxynon-2-enal + NADP(+) + H2O = (E)-4-hydroxynon-2-enoate + NADPH + 2 H(+). The catalysed reaction is benzaldehyde + NADP(+) + H2O = benzoate + NADPH + 2 H(+). It participates in alcohol metabolism; ethanol degradation; acetate from ethanol: step 2/2. In terms of biological role, oxidizes medium and long chain saturated and unsaturated fatty aldehydes generated in the plasma membrane into non-toxic fatty acids. May have a protective role against the cytotoxicity induced by lipid peroxidation. Short-chain fatty aldehydes are not good substrates. Can use both NADP(+) and NAD(+) as electron acceptor in vitro, however in vivo preference will depend on their tissue levels. Low activity towards acetaldehyde and 3,4-dihydroxyphenylacetaldehyde. Able to metabolize aromatic aldehydes such as benzaldehyde to their acid form. The sequence is that of Aldehyde dehydrogenase family 3 member B1 (ALDH3B1) from Homo sapiens (Human).